We begin with the raw amino-acid sequence, 412 residues long: Phosphoglycerate kinase, plasmid (412 aa).

Substrate-binding positions include 39–41 (DLN), Arg-55, 78–81 (HLGR), Arg-133, and Arg-166. ATP contacts are provided by residues Lys-217, Glu-339, and 365-368 (GGDT).

It belongs to the phosphoglycerate kinase family. As to quaternary structure, monomer.

Its subcellular location is the cytoplasm. The enzyme catalyses (2R)-3-phosphoglycerate + ATP = (2R)-3-phospho-glyceroyl phosphate + ADP. It functions in the pathway carbohydrate biosynthesis; Calvin cycle. The sequence is that of Phosphoglycerate kinase, plasmid (cbbKP) from Cupriavidus necator (strain ATCC 17699 / DSM 428 / KCTC 22496 / NCIMB 10442 / H16 / Stanier 337) (Ralstonia eutropha).